The chain runs to 131 residues: Maturin (131 aa).

Tyrosine 34 is modified (phosphotyrosine). The span at 107–120 (FEEYSADVEEEEPE) shows a compositional bias: acidic residues. A disordered region spans residues 107–131 (FEEYSADVEEEEPEADHPQMGVSQQ).

The protein belongs to the MTURN family. Phosphorylation at Tyr-34 is essential for its ability to promote megakaryocyte differentiation. As to expression, expressed in the thymus, bone marrow and spleen.

The protein localises to the cytoplasm. Promotes megakaryocyte differentiation by enhancing ERK and JNK signaling as well as up-regulating RUNX1 and FLI1 expression. Represses NF-kappa-B transcriptional activity by inhibiting phosphorylation of RELA at 'Ser- 536'. May be involved in early neuronal development. This chain is Maturin (Mturn), found in Mus musculus (Mouse).